Consider the following 450-residue polypeptide: Chromosomal replication initiator protein DnaA (450 aa).

The domain I, interacts with DnaA modulators stretch occupies residues 1 to 76 (MNLNDILKEL…KKILKQPVNI (76 aa)). Positions 76–107 (ISFTYEQEYQKQLEKTESINKDHSDIISKKNK) are domain II. The domain III, AAA+ region stretch occupies residues 108 to 327 (KVNENTFENF…GSVSRLNFWS (220 aa)). Residues Gly-151, Gly-153, Lys-154, and Thr-155 each contribute to the ATP site. The tract at residues 328–450 (QQNPEEKVIT…DILKNKILTK (123 aa)) is domain IV, binds dsDNA.

Belongs to the DnaA family. In terms of assembly, oligomerizes as a right-handed, spiral filament on DNA at oriC.

Its subcellular location is the cytoplasm. The protein resides in the cell membrane. In terms of biological role, plays an essential role in the initiation and regulation of chromosomal replication. ATP-DnaA binds to the origin of replication (oriC) to initiate formation of the DNA replication initiation complex once per cell cycle. Binds the DnaA box (a 9 base pair repeat at the origin) and separates the double-stranded (ds)DNA. Forms a right-handed helical filament on oriC DNA; dsDNA binds to the exterior of the filament while single-stranded (ss)DNA is stabiized in the filament's interior. The ATP-DnaA-oriC complex binds and stabilizes one strand of the AT-rich DNA unwinding element (DUE), permitting loading of DNA polymerase. After initiation quickly degrades to an ADP-DnaA complex that is not apt for DNA replication. Binds acidic phospholipids. In Mycoplasma capricolum subsp. capricolum (strain California kid / ATCC 27343 / NCTC 10154), this protein is Chromosomal replication initiator protein DnaA.